The chain runs to 550 residues: Membrane protein insertase YidC (550 aa).

Residues 6-26 (LIVFIVLSFGLLFVWQEYFAP) traverse the membrane as a helical segment. The tract at residues 30 to 59 (PKPVAAAVQPDGTPAPATARPADSPATGKL) is disordered. Helical transmembrane passes span 360–380 (WGWAIVLLTVLVKAAFYPLSA), 430–450 (LPIVVQIPVFIGLYWALLASV), 472–492 (ILPALMAATMYLQTFLNPPPA), and 504–524 (PLAFSVMFFFFPAGLVLYWLV).

It belongs to the OXA1/ALB3/YidC family. Type 1 subfamily. As to quaternary structure, interacts with the Sec translocase complex via SecD. Specifically interacts with transmembrane segments of nascent integral membrane proteins during membrane integration.

It localises to the cell inner membrane. Required for the insertion and/or proper folding and/or complex formation of integral membrane proteins into the membrane. Involved in integration of membrane proteins that insert both dependently and independently of the Sec translocase complex, as well as at least some lipoproteins. Aids folding of multispanning membrane proteins. In Laribacter hongkongensis (strain HLHK9), this protein is Membrane protein insertase YidC.